The sequence spans 341 residues: Methionine import ATP-binding protein MetN 1 (341 aa).

The ABC transporter domain maps to 2 to 241 (IEFKNVNKVF…PQTNTAKNFV (240 aa)). 38–45 (GYSGAGKS) contacts ATP.

The protein belongs to the ABC transporter superfamily. Methionine importer (TC 3.A.1.24) family. As to quaternary structure, the complex is composed of two ATP-binding proteins (MetN), two transmembrane proteins (MetI) and a solute-binding protein (MetQ).

The protein localises to the cell membrane. The catalysed reaction is L-methionine(out) + ATP + H2O = L-methionine(in) + ADP + phosphate + H(+). It catalyses the reaction D-methionine(out) + ATP + H2O = D-methionine(in) + ADP + phosphate + H(+). In terms of biological role, part of the ABC transporter complex MetNIQ involved in methionine import. Responsible for energy coupling to the transport system. This chain is Methionine import ATP-binding protein MetN 1, found in Staphylococcus epidermidis (strain ATCC 35984 / DSM 28319 / BCRC 17069 / CCUG 31568 / BM 3577 / RP62A).